The following is a 423-amino-acid chain: Galactosylceramide sulfotransferase (423 aa).

The Cytoplasmic portion of the chain corresponds to 1 to 14 (MPLPQKKRWESMAK). The chain crosses the membrane as a helical; Signal-anchor for type II membrane protein span at residues 15–35 (GLVLGALFTSFLLLLYSYAVP). Residues 36–423 (PLYTGLASTT…WKFIRDFLRW (388 aa)) lie on the Lumenal side of the membrane. The disordered stretch occupies residues 48-70 (GAAPCSPAPREPEAPTSANGSAG). Residues asparagine 66, asparagine 156, and asparagine 312 are each glycosylated (N-linked (GlcNAc...) asparagine).

Belongs to the galactose-3-O-sulfotransferase family.

The protein resides in the golgi apparatus membrane. The enzyme catalyses a beta-D-galactosyl-(1&lt;-&gt;1')-N-acylsphing-4-enine + 3'-phosphoadenylyl sulfate = an N-acyl-1-beta-D-(3-O-sulfo)-galactosyl-sphing-4-enine + adenosine 3',5'-bisphosphate + H(+). The catalysed reaction is a 1-O-alkyl-2-acyl-3-O-(beta-D-galactosyl)-sn-glycerol + 3'-phosphoadenylyl sulfate = a 1-O-alkyl-2-acyl-3-(beta-D-3-sulfogalactosyl)-sn-glycerol + adenosine 3',5'-bisphosphate + H(+). It carries out the reaction a beta-D-Gal-(1&lt;-&gt;1')-ceramide + 3'-phosphoadenylyl sulfate = 1-(3-O-sulfo-beta-D-galactosyl)-ceramide + adenosine 3',5'-bisphosphate + H(+). It catalyses the reaction a 1,2-diacyl-3-O-(beta-D-galactosyl)-sn-glycerol + 3'-phosphoadenylyl sulfate = 1,2-diacyl-3-(3-O-sulfo-beta-D-galactosyl)-sn-glycerol + adenosine 3',5'-bisphosphate + H(+). The enzyme catalyses a beta-D-Gal-(1-&gt;4)-beta-D-Glc-(1&lt;-&gt;1)-Cer(d18:1(4E)) + 3'-phosphoadenylyl sulfate = beta-D-3-sulfogalactosyl-(1-&gt;4)-beta-D-glucosyl-(1&lt;-&gt;1')-N-acylsphing-4-enine + adenosine 3',5'-bisphosphate + H(+). It functions in the pathway lipid metabolism; sphingolipid metabolism. Its function is as follows. Catalyzes the transfer of a sulfate group to position 3 of non-reducing beta-galactosyl residues in glycerolipids and sphingolipids, therefore participates in the biosynthesis of sulfoglycolipids. Catalyzes the synthesis of galactosylceramide sulfate (sulfatide), a major lipid component of the myelin sheath and of monogalactosylalkylacylglycerol sulfate (seminolipid), present in spermatocytes. Seems to prefer beta-glycosides at the non-reducing termini of sugar chains attached to a lipid moiety. Also acts on lactosylceramide, galactosyl 1-alkyl-2-sn-glycerol and galactosyl diacylglycerol (in vitro). The sequence is that of Galactosylceramide sulfotransferase from Bos taurus (Bovine).